We begin with the raw amino-acid sequence, 320 residues long: ATP-dependent 6-phosphofructokinase (320 aa).

An ATP-binding site is contributed by Gly12. ADP-binding positions include 22-26 and 55-60; these read RGVVR and RYSVSD. ATP is bound by residues 73 to 74 and 103 to 106; these read RF and GDGS. Residue Asp104 coordinates Mg(2+). Residue 126–128 coordinates substrate; that stretch reads TID. Asp128 functions as the Proton acceptor in the catalytic mechanism. Position 155 (Arg155) interacts with ADP. Substrate-binding positions include Arg163 and 170 to 172; that span reads MGR. Residues 186 to 188, Lys212, and 214 to 216 each bind ADP; these read GCE and KKH. Substrate contacts are provided by residues Glu223, Arg244, and 250–253; that span reads HIQR.

This sequence belongs to the phosphofructokinase type A (PFKA) family. ATP-dependent PFK group I subfamily. Prokaryotic clade 'B1' sub-subfamily. Homotetramer. It depends on Mg(2+) as a cofactor.

Its subcellular location is the cytoplasm. The catalysed reaction is beta-D-fructose 6-phosphate + ATP = beta-D-fructose 1,6-bisphosphate + ADP + H(+). The protein operates within carbohydrate degradation; glycolysis; D-glyceraldehyde 3-phosphate and glycerone phosphate from D-glucose: step 3/4. Its activity is regulated as follows. Allosterically activated by ADP and other diphosphonucleosides, and allosterically inhibited by phosphoenolpyruvate. Functionally, catalyzes the phosphorylation of D-fructose 6-phosphate to fructose 1,6-bisphosphate by ATP, the first committing step of glycolysis. This chain is ATP-dependent 6-phosphofructokinase, found in Salmonella agona (strain SL483).